The sequence spans 119 residues: Large ribosomal subunit protein uL18 (119 aa).

Belongs to the universal ribosomal protein uL18 family. Part of the 50S ribosomal subunit; part of the 5S rRNA/L5/L18/L25 subcomplex. Contacts the 5S and 23S rRNAs.

Functionally, this is one of the proteins that bind and probably mediate the attachment of the 5S RNA into the large ribosomal subunit, where it forms part of the central protuberance. The sequence is that of Large ribosomal subunit protein uL18 from Borrelia recurrentis (strain A1).